The following is a 303-amino-acid chain: Coenzyme PQQ synthesis protein B (303 aa).

This sequence belongs to the PqqB family.

The protein operates within cofactor biosynthesis; pyrroloquinoline quinone biosynthesis. May be involved in the transport of PQQ or its precursor to the periplasm. The chain is Coenzyme PQQ synthesis protein B from Pseudomonas fluorescens (strain SBW25).